Reading from the N-terminus, the 461-residue chain is tRNA modification GTPase MnmE (461 aa).

Residues Arg-22, Glu-87, and Arg-126 each contribute to the (6S)-5-formyl-5,6,7,8-tetrahydrofolate site. The 160-residue stretch at 223-382 (GLSTVILGRP…LEEAIAALFF (160 aa)) folds into the TrmE-type G domain. Position 233 (Asn-233) interacts with K(+). Residues 233-238 (NVGKSS), 252-258 (TDIAGTT), and 277-280 (DTAG) each bind GTP. Residue Ser-237 coordinates Mg(2+). Thr-252, Ile-254, and Thr-257 together coordinate K(+). Thr-258 provides a ligand contact to Mg(2+). Lys-461 lines the (6S)-5-formyl-5,6,7,8-tetrahydrofolate pocket.

Belongs to the TRAFAC class TrmE-Era-EngA-EngB-Septin-like GTPase superfamily. TrmE GTPase family. As to quaternary structure, homodimer. Heterotetramer of two MnmE and two MnmG subunits. The cofactor is K(+).

It localises to the cytoplasm. Exhibits a very high intrinsic GTPase hydrolysis rate. Involved in the addition of a carboxymethylaminomethyl (cmnm) group at the wobble position (U34) of certain tRNAs, forming tRNA-cmnm(5)s(2)U34. The sequence is that of tRNA modification GTPase MnmE from Lysinibacillus sphaericus (strain C3-41).